Consider the following 260-residue polypeptide: 5'-nucleotidase SurE (260 aa).

Residues D8, D9, S43, and N96 each coordinate a divalent metal cation.

This sequence belongs to the SurE nucleotidase family. It depends on a divalent metal cation as a cofactor.

It is found in the cytoplasm. The enzyme catalyses a ribonucleoside 5'-phosphate + H2O = a ribonucleoside + phosphate. In terms of biological role, nucleotidase that shows phosphatase activity on nucleoside 5'-monophosphates. This Ruegeria pomeroyi (strain ATCC 700808 / DSM 15171 / DSS-3) (Silicibacter pomeroyi) protein is 5'-nucleotidase SurE.